The following is a 525-amino-acid chain: MHPSMTLLAILPPLVRASIGNPHLLPTPPMGFNNWARFMCNLNESLFLDTAAAMLDTGLHAAGYTRLNLDDCWMASHRAPNGSLPWDPTKFPHSLPWLSAQLRSLGFSLGIYQDAGNVTCGGYPGSYGFEELDAHTFAEWGVDYLKLDGCNVSPAGAVSLADEYRARYARWHSVLGAMPHPLVFSESAPAYFVDPQNATAWYGVMDWVPAYGELARHSTDILVYEGEGSAWQSIMVNYRYNTLLARYQRPGYFNDPDFLIADHPGLSLVEKRSHFALWASFGAPLIISADVPGLSKEVIAVLTNADLIRVDQDALGLQATLASRSEHLDVLTRSLDGGDRLVTILNRGDGGLAVKVPVGWMGLQRCAYQAKNLWDGEIQEIEEDIEVQLDSHATEVFRVSLPPDCPMVIPTGIVFNTASGNCLTDGEALAFEPCRGQDLQVWQVEESGILRPLSRTSHCLTAIGDNVVVKPCTGRPGQRWTYHITGNLQNQHTGACLTEGTGIDVCGFELDSQVFGLPSGVDIEA.

A signal peptide spans 1-17 (MHPSMTLLAILPPLVRA). Cysteine 40 and cysteine 72 are disulfide-bonded. N-linked (GlcNAc...) asparagine glycans are attached at residues asparagine 43, asparagine 81, and asparagine 117. Cysteine 120 and cysteine 150 are disulfide-bonded. Aspartate 148 functions as the Nucleophile in the catalytic mechanism. The N-linked (GlcNAc...) asparagine glycan is linked to asparagine 197. Aspartate 206 functions as the Proton donor in the catalytic mechanism. The region spanning 402-525 (PPDCPMVIPT…GLPSGVDIEA (124 aa)) is the Ricin B-type lectin domain. 2 disulfide bridges follow: cysteine 422–cysteine 434 and cysteine 459–cysteine 472.

The protein belongs to the glycosyl hydrolase 27 family.

It is found in the secreted. It carries out the reaction Hydrolysis of terminal, non-reducing alpha-D-galactose residues in alpha-D-galactosides, including galactose oligosaccharides, galactomannans and galactolipids.. Hydrolyzes a variety of simple alpha-D-galactoside as well as more complex molecules such as oligosaccharides and polysaccharides. The sequence is that of Probable alpha-galactosidase A (aglA) from Aspergillus clavatus (strain ATCC 1007 / CBS 513.65 / DSM 816 / NCTC 3887 / NRRL 1 / QM 1276 / 107).